Here is a 105-residue protein sequence, read N- to C-terminus: uncharacterized protein (105 aa).

A Helicase C-terminal domain is found at 2-42 (QVLIGTKLVTEGIDIKQLMMVIMLDNRLNIIELIQGVGRLR).

This sequence belongs to the helicase family. Yeast subtelomeric Y' repeat subfamily.

This is an uncharacterized protein from Saccharomyces cerevisiae (strain ATCC 204508 / S288c) (Baker's yeast).